The following is a 164-amino-acid chain: Glycine cleavage system H protein, mitochondrial (164 aa).

The N-terminal 34 residues, 1-34 (MALRLWASSAANALKISCSGATRAAPAYSISRYF), are a transit peptide targeting the mitochondrion. The 83-residue stretch at 56–138 (VATIGITDHA…YEDGWMIKVK (83 aa)) folds into the Lipoyl-binding domain. Lys-97 bears the N6-lipoyllysine mark.

The protein belongs to the GcvH family. As to quaternary structure, the glycine cleavage system is composed of four proteins: P, T, L and H. (R)-lipoate serves as cofactor.

The protein localises to the mitochondrion. In terms of biological role, the glycine cleavage system catalyzes the degradation of glycine. The H protein shuttles the methylamine group of glycine from the P protein to the T protein. This is Glycine cleavage system H protein, mitochondrial (GDCSH) from Oryza sativa subsp. indica (Rice).